Reading from the N-terminus, the 378-residue chain is Acyl-coenzyme A diphosphatase NUDT19 (378 aa).

One can recognise a Nudix hydrolase domain in the interval 7-258; sequence HWREAASVLL…EIWLAPPQFY (252 aa). The short motif at 105 to 126 is the Nudix box element; sequence SPLPGEVAFRICAIRETFEEAG. Mg(2+)-binding residues include Glu-120 and Glu-124. The short motif at 376–378 is the Microbody targeting signal element; the sequence is SRL.

It belongs to the Nudix hydrolase family. As to quaternary structure, monomer. Mg(2+) serves as cofactor. The cofactor is Mn(2+).

The protein resides in the peroxisome. The enzyme catalyses an acyl-CoA + H2O = an acyl-4'-phosphopantetheine + adenosine 3',5'-bisphosphate + 2 H(+). It carries out the reaction CoA + H2O = (R)-4'-phosphopantetheine + adenosine 3',5'-bisphosphate + 2 H(+). The catalysed reaction is hexanoyl-CoA + H2O = hexanoyl-4'-phosphopantetheine + adenosine 3',5'-bisphosphate + 2 H(+). It catalyses the reaction octanoyl-CoA + H2O = S-octanoyl-4'-phosphopantetheine + adenosine 3',5'-bisphosphate + 2 H(+). The enzyme catalyses butanoyl-CoA + H2O = S-butanoyl-4'-phosphopantetheine + adenosine 3',5'-bisphosphate + 2 H(+). It carries out the reaction propanoyl-CoA + H2O = propanoyl-4'-phosphopantetheine + adenosine 3',5'-bisphosphate + 2 H(+). The catalysed reaction is malonyl-CoA + H2O = malonyl-4'-phosphopantetheine + adenosine 3',5'-bisphosphate + 2 H(+). It catalyses the reaction succinyl-CoA + H2O = succinyl-4'-phosphopantetheine + adenosine 3',5'-bisphosphate + 2 H(+). The enzyme catalyses choloyl-CoA + H2O = S-choloyl-4'-phosphopantetheine + adenosine 3',5'-bisphosphate + 2 H(+). It carries out the reaction 4,8-dimethylnonanoyl-CoA + H2O = S-(4,8-dimethylnonanoyl)-4'-phosphopantetheine + adenosine 3',5'-bisphosphate + 2 H(+). The catalysed reaction is (9Z,12Z,15Z)-octadecatrienoyl-CoA + H2O = S-(9Z,12Z,15Z-octadecatrienoyl)-4'-phosphopantetheine + adenosine 3',5'-bisphosphate + 2 H(+). It catalyses the reaction (9Z,12Z)-octadecadienoyl-CoA + H2O = S-(9Z,12Z-octadecadienoyl)-4'-phosphopantetheine + adenosine 3',5'-bisphosphate + 2 H(+). The enzyme catalyses (9Z)-hexadecenoyl-CoA + H2O = S-(9Z-hexadecenoyl)-4'-phosphopantetheine + adenosine 3',5'-bisphosphate + 2 H(+). It carries out the reaction (9Z)-tetradecenoyl-CoA + H2O = S-(9Z-tetradecenoyl)-4'-phosphopantetheine + adenosine 3',5'-bisphosphate + 2 H(+). The catalysed reaction is (6Z)-octenoyl-CoA + H2O = S-(6Z-octenoyl)-4'-phosphopantetheine + adenosine 3',5'-bisphosphate + 2 H(+). It catalyses the reaction hexadecanoyl-CoA + H2O = S-hexadecanoyl-4'-phosphopantetheine + adenosine 3',5'-bisphosphate + 2 H(+). The enzyme catalyses tetradecanoyl-CoA + H2O = tetradecanoyl-4'-phosphopantetheine + adenosine 3',5'-bisphosphate + 2 H(+). It carries out the reaction dodecanoyl-CoA + H2O = S-dodecanoyl-4'-phosphopantetheine + adenosine 3',5'-bisphosphate + 2 H(+). The catalysed reaction is a 5'-end CoA-ribonucleoside in mRNA + H2O = a 5'-end phospho-adenosine-phospho-ribonucleoside in mRNA + (R)-4'-phosphopantetheine + 2 H(+). Functionally, fatty acyl-coenzyme A (CoA) diphosphatase that hydrolyzes fatty acyl-CoA to yield acyl-4'-phosphopantetheine and adenosine 3',5'-bisphosphate. Mediates the hydrolysis of a wide range of CoA esters, including choloyl-CoA and branched-chain fatty-acyl-CoA esters and at low substrate concentrations medium and long-chain fatty-acyl-CoA esters are the primary substrates. Highest activity seen with medium-chain acyl-CoA esters and higher rates of activity seen with the unsaturated acyl-CoA esters compared with the saturated esters. Exhibits decapping activity towards dpCoA-capped RNAs in vitro. The chain is Acyl-coenzyme A diphosphatase NUDT19 (NUDT19) from Gallus gallus (Chicken).